Reading from the N-terminus, the 114-residue chain is Histone H2B (114 aa).

A disordered region spans residues 1–22; it reads MAKTPSKKAAKAPKKAGSKRNK. Position 3 is an N6-acetyllysine (Lys3). Lys110 is covalently cross-linked (Glycyl lysine isopeptide (Lys-Gly) (interchain with G-Cter in ubiquitin)).

It belongs to the histone H2B family. As to quaternary structure, the nucleosome is a histone octamer containing two molecules each of H2A, H2B, H3 and H4 assembled in one H3-H4 heterotetramer and two H2A-H2B heterodimers. The octamer wraps approximately 147 bp of DNA. Post-translationally, monoubiquitination of Lys-110 gives a specific tag for epigenetic transcriptional activation and is also prerequisite for histone H3 'Lys-4' and 'Lys-79' methylation.

Its subcellular location is the nucleus. It localises to the chromosome. Functionally, core component of nucleosome. Nucleosomes wrap and compact DNA into chromatin, limiting DNA accessibility to the cellular machineries which require DNA as a template. Histones thereby play a central role in transcription regulation, DNA repair, DNA replication and chromosomal stability. DNA accessibility is regulated via a complex set of post-translational modifications of histones, also called histone code, and nucleosome remodeling. This Olisthodiscus luteus (Marine phytoflagellate) protein is Histone H2B.